Reading from the N-terminus, the 296-residue chain is Protoheme IX farnesyltransferase (296 aa).

Topologically, residues 1 to 9 are cytoplasmic; that stretch reads MMFKQYLQV. The chain crosses the membrane as a helical span at residues 10-28; that stretch reads TKPGIIFGNLISVIGGFLL. At 29-37 the chain is on the periplasmic side; sequence ASKGSIDYP. Residues 38–56 traverse the membrane as a helical segment; it reads LFIYTLVGVSLVVASGCVF. Topologically, residues 57–78 are cytoplasmic; it reads NNYIDRDIDRKMERTKNRVLVK. Residues 79-97 form a helical membrane-spanning segment; the sequence is GLISPAVSLVYATLLGFAG. The Periplasmic segment spans residues 98-107; sequence FMLLWFGANP. A helical transmembrane segment spans residues 108-126; the sequence is LACWLGVMGFVVYVGVYSL. The Cytoplasmic segment spans residues 127-197; sequence YMKRHSVYGT…YQAANIPVLP (71 aa). A helical membrane pass occupies residues 198-216; sequence VVKGISVAKNHITLYIIAF. The Periplasmic segment spans residues 217–228; sequence AVATLMLSLGGY. A helical membrane pass occupies residues 229-247; it reads AGYKYLVVAAAVSVWWLGM. The Cytoplasmic segment spans residues 248–268; that stretch reads ALRGYKVADDRIWARKLFGFS. The helical transmembrane segment at 269 to 287 threads the bilayer; sequence IIAITALSVMMSVDFMVPD. The Periplasmic portion of the chain corresponds to 288 to 296; the sequence is SHTLLAAVW.

This sequence belongs to the UbiA prenyltransferase family. Protoheme IX farnesyltransferase subfamily.

It localises to the cell inner membrane. The enzyme catalyses heme b + (2E,6E)-farnesyl diphosphate + H2O = Fe(II)-heme o + diphosphate. It functions in the pathway porphyrin-containing compound metabolism; heme O biosynthesis; heme O from protoheme: step 1/1. Converts heme B (protoheme IX) to heme O by substitution of the vinyl group on carbon 2 of heme B porphyrin ring with a hydroxyethyl farnesyl side group. This is Protoheme IX farnesyltransferase from Shigella sonnei (strain Ss046).